We begin with the raw amino-acid sequence, 380 residues long: Actin-like protein (380 aa).

This sequence belongs to the actin family. ARP1 subfamily.

It localises to the cytoplasm. The protein localises to the cytoskeleton. Its function is as follows. Involved in nuclear migration. May function as a component of the dynactin complex which activates force generation by cytoplasmic dynein. The polypeptide is Actin-like protein (ro-4) (Neurospora crassa (strain ATCC 24698 / 74-OR23-1A / CBS 708.71 / DSM 1257 / FGSC 987)).